Here is a 352-residue protein sequence, read N- to C-terminus: MEPDIKSISSESMEGVSDFSPSSWEHGGYLDKVEPEIDENGSMIPKYKIYTPGANERKYNNYMYLICYGFVEDVERTPETGKRKKIRTIAAYPLGVGKSASHPQDLLEELCSLKVTVRRTAGSTEKIVFGSSGPLNHLVPWKKVLTSGSIFNAVKVCRNVDQIQLDKHQALRIFFLSITKLNDSGIYMIPRTMLEFRRNNAIAFNLLVYLKIDADLSKMGIQGSLDKDGFKVASFMLHLGNFVRRAGKYYSVDYCRRKIDRMKLQFSLGSIGGLSLHIKINGVISKRLFAQMGFQKNLCFSLMDINPWLNRLTWNNSCEISRVAAVLQPSIPREFMIYDDVFIDNTGRILKG.

The disordered stretch occupies residues 1–22 (MEPDIKSISSESMEGVSDFSPS). The Nuclear export signal 1 signature appears at 106–115 (LLEELCSLKV). The Nuclear localization signal signature appears at 244-258 (RRAGKYYSVDYCRRK). The Nuclear export signal 2 motif lies at 268–276 (LGSIGGLSL).

The protein belongs to the morbillivirus/respirovirus/rubulavirus M protein family. Homomultimer. Interacts with host TRIM6; this interaction inhibits the IKBKE-dependent activation of the type I interferon signaling pathway. Interacts with host ANP32B; this interaction promotes M nuclear localization. Ubiquitinated; regulates matrix nuclear export.

It localises to the virion. The protein resides in the host cytoplasm. Its subcellular location is the host cell membrane. It is found in the host nucleus. In terms of biological role, plays a crucial role in virion assembly and budding. Forms a shell at the inner face of the plasma membrane. Transits through the host nucleus before gaining the functional ability to localize and bud from the plasma membrane. Mediates together with fusion protein the incorporation of the glycoprotein to the viral particles. Also participates in the inhibition of the host interferon type I antiviral response by interacting with and thereby inhibiting host TRIM6. In Cynopterus brachyotis (Lesser short-nosed fruit bat), this protein is Matrix protein (M).